We begin with the raw amino-acid sequence, 500 residues long: Carnosic acid synthase (500 aa).

A helical membrane pass occupies residues 4-24 (LILLSLAFLASCVVAYSRRRP). Residue C443 participates in heme binding.

The protein belongs to the cytochrome P450 family. Heme serves as cofactor. As to expression, mostly expressed in young leaves, particularly in glandular trichomes.

The protein localises to the membrane. The enzyme catalyses 11-hydroxyferruginol + 3 reduced [NADPH--hemoprotein reductase] + 3 O2 = carnosate + 3 oxidized [NADPH--hemoprotein reductase] + 4 H2O + 4 H(+). It carries out the reaction miltiradiene + 2 reduced [NADPH--hemoprotein reductase] + 2 O2 = miltiradien-20-al + 2 oxidized [NADPH--hemoprotein reductase] + 3 H2O + 2 H(+). The catalysed reaction is ferruginol + 3 reduced [NADPH--hemoprotein reductase] + 3 O2 = pisiferate + 3 oxidized [NADPH--hemoprotein reductase] + 4 H2O + 4 H(+). The protein operates within secondary metabolite biosynthesis; terpenoid biosynthesis. In terms of biological role, monooxygenase involved in the biosynthesis of carnosate, a potent antioxidant labdane-related diterpene natural product. Catalyzes the oxidation of 11-hydroxyferruginol to produce carnosate. Mediates the conversion of miltiradien into miltiradien-20-al. Also involved in the production of pisiferic acid and derivative products from ferruginol. The polypeptide is Carnosic acid synthase (Salvia fruticosa (Greek sage)).